Consider the following 581-residue polypeptide: Nicotinic acid-CoA ligase pyr1 (581 aa).

204–215 contributes to the AMP binding site; that stretch reads MFLTSGTSGLPK. The segment at 477 to 555 is AMP-binding; sequence EIEGILLKDP…DEIPRTGIGK (79 aa).

Belongs to the ATP-dependent AMP-binding enzyme family.

The catalysed reaction is nicotinate + ATP + CoA = nicotinyl-CoA + AMP + diphosphate. It functions in the pathway secondary metabolite biosynthesis; terpenoid biosynthesis. Functionally, nicotinic acid-CoA ligase; part of the gene cluster that mediates the biosynthesis of pyripyropene A, a specific human acyl-coenzyme A:cholesterol acyltransferase 2 inhibitor. The first step of the pathway is the synthesis of nicotinyl-CoA from nicotinic acid by the nicotinic acid-CoA ligase pyr1. Nicotinyl-CoA is then a substrate of polyketide synthase pyr2 to produce 4-hydroxy-6-(3-pyridinyl)-2H-pyran-2-one (HPPO) which is further prenylated by the polyprenyl transferase pyr6 to yield farnesyl-HPPO. The next steps consist of an epoxidation of farnesyl-HPPO to epoxyfarnesyl-HPPO by FAD-dependent monooxygenase pyr5 and a cyclization of the terpenoid portion by the terpene cyclase pyr4 to yield deacetyl-pyripyropene E. The 2 cytochrome P450 monooxygenases pyr3 and pyr9, and the 2 acetyltransferases pyr7 and pyr8 are involved in the conversion of deacetyl-pyripyropene E into pyripyropene A through several cycles of oxidation and acetylation steps. Pyr7 acetylates deacetyl-pyripyropene E to pyripyropene E which is oxidized to 11-deacetyl-pyripyropene O by pyr3, which is in turn acetylated into pyripyropene O by pyr8. Pyripyropene O is then oxidized to deacetyl-pyripyropene A by pyr9. Deacetyl-pyripyropene A is finally acetylated to pyripyropene A by pyr8. The chain is Nicotinic acid-CoA ligase pyr1 from Aspergillus fumigatus (strain ATCC MYA-4609 / CBS 101355 / FGSC A1100 / Af293) (Neosartorya fumigata).